Here is an 85-residue protein sequence, read N- to C-terminus: Phosphocarrier protein HPr (85 aa).

The region spanning 1 to 85 is the HPr domain; that stretch reads MYEKQVEITA…HLVALMDQLH (85 aa). His15 serves as the catalytic Pros-phosphohistidine intermediate.

This sequence belongs to the HPr family.

It localises to the cytoplasm. Its function is as follows. General (non sugar-specific) component of the phosphoenolpyruvate-dependent sugar phosphotransferase system (sugar PTS). This major carbohydrate active-transport system catalyzes the phosphorylation of incoming sugar substrates concomitantly with their translocation across the cell membrane. The phosphoryl group from phosphoenolpyruvate (PEP) is transferred to the phosphoryl carrier protein HPr by enzyme I. Phospho-HPr then transfers it to the PTS EIIA domain. The protein is Phosphocarrier protein HPr (ptsH) of Vibrio cholerae serotype O1 (strain ATCC 39315 / El Tor Inaba N16961).